The primary structure comprises 293 residues: Caspase-6 (293 aa).

The segment at 1 to 20 is disordered; that stretch reads MSSEPPPRRARGPGEEQNMT. The propeptide occupies 1–23; sequence MSSEPPPRRARGPGEEQNMTEID. A tri-arginine exosite region spans residues 42–44; it reads KRR. Serine 79 bears the Phosphoserine mark. The active site involves histidine 121. The tract at residues 125–142 is 130's region; the sequence is NHIYAYDAKIEIQTLTGL. Cysteine 163 is an active-site residue. Residues 180 to 193 constitute a propeptide that is removed on maturation; that stretch reads HRTDTPDANLTQVD. Serine 257 is modified (phosphoserine). S-palmitoyl cysteine attachment occurs at residues cysteine 264 and cysteine 277.

This sequence belongs to the peptidase C14A family. Heterotetramer that consists of two anti-parallel arranged heterodimers, each one formed by a 18 kDa (p18) and a 11 kDa (p11) subunits. Interacts with BIRC6/bruce. Interacts with RIPK3. As to quaternary structure, heterotetramer that consists of two anti-parallel arranged heterodimers, each one formed by a 18 kDa (Caspase-6 subunit p18) and a 11 kDa (Caspase-6 subunit p11) subunit. In terms of processing, phosphorylated by NUAK1; phosphorylation inhibits self-activation. Phosphorylation at Ser-257 by AMP-activated protein kinase (PRKAA1 or PRKAA2) inhibits autocleavage, preventing caspase activation, thereby preventing hepatocyte apoptosis. Post-translationally, palmitoylation by ZDHHC17 blocks dimerization and subsequent activation, leading to inhibit the cysteine protease activity. Can be cleaved and activated by different caspases, depending on the context. Cleaved and activated by caspase-8 (CASP8) and subsequently by caspase-3 (CASP3). Can also undergo autoactivation by mediating autocleavage at Asp-179 and Asp-193, while it is not able to cleave its N-terminal disordered prodomain. Cleaved and activated by CASP1, possibly in the context of inflammation.

The protein localises to the cytoplasm. It is found in the nucleus. The enzyme catalyses Strict requirement for Asp at position P1 and has a preferred cleavage sequence of Val-Glu-His-Asp-|-.. With respect to regulation, during activation, the N-terminal disordered prodomain is removed by cleavage. Concomitantly, double cleavage gives rise to a large 18-kDa and a small 11-kDa subunit. The two large and two small subunits then assemble to form the active CASP6 complex. Can be cleaved and activated by different caspases, depending on the context. Cleaved and activated by caspase-8 (CASP8) and subsequently by caspase-3 (CASP3). Can also undergo autoactivation by mediating autocleavage at Asp-179 and Asp-193, while it is not able to cleave its N-terminal disordered prodomain. Intramolecular cleavage at Asp-193 is a prerequisite for CASP6 self-activation. Cleaved and activated by CASP1 in neurons, possibly in the context of inflammation. Phosphorylation at Ser-257 inhibits autocleavage, preventing caspase activation. In terms of biological role, cysteine protease that plays essential roles in programmed cell death, axonal degeneration, development and innate immunity. Acts as a non-canonical executioner caspase during apoptosis: localizes in the nucleus and cleaves the nuclear structural protein NUMA1 and lamin A/LMNA thereby inducing nuclear shrinkage and fragmentation. Lamin-A/LMNA cleavage is required for chromatin condensation and nuclear disassembly during apoptotic execution. Acts as a regulator of liver damage by promoting hepatocyte apoptosis: in absence of phosphorylation by AMP-activated protein kinase (AMPK), catalyzes cleavage of BID, leading to cytochrome c release, thereby participating in nonalcoholic steatohepatitis. Cleaves PARK7/DJ-1 in cells undergoing apoptosis. Involved in intrinsic apoptosis by mediating cleavage of RIPK1. Furthermore, cleaves many transcription factors such as NF-kappa-B and cAMP response element-binding protein/CREBBP. Cleaves phospholipid scramblase proteins XKR4 and XKR9. In addition to apoptosis, involved in different forms of programmed cell death. Plays an essential role in defense against viruses by acting as a central mediator of the ZBP1-mediated pyroptosis, apoptosis, and necroptosis (PANoptosis), independently of its cysteine protease activity. PANoptosis is a unique inflammatory programmed cell death, which provides a molecular scaffold that allows the interactions and activation of machinery required for inflammasome/pyroptosis, apoptosis and necroptosis. Mechanistically, interacts with RIPK3 and enhances the interaction between RIPK3 and ZBP1, leading to ZBP1-mediated inflammasome activation and cell death. Plays an essential role in axon degeneration during axon pruning which is the remodeling of axons during neurogenesis but not apoptosis. Regulates B-cell programs both during early development and after antigen stimulation. This chain is Caspase-6, found in Bos taurus (Bovine).